The primary structure comprises 243 residues: Venom nerve growth factor (243 aa).

The N-terminal stretch at 1–18 (MSMLCYTLIIVFLIGIWA) is a signal peptide. A propeptide spanning residues 19–125 (APKSEDNVPL…TLNRNIRAKR (107 aa)) is cleaved from the precursor. Residues 47–66 (GLKTSRNTDQRHPAPKKAED) show a composition bias toward basic and acidic residues. The disordered stretch occupies residues 47 to 69 (GLKTSRNTDQRHPAPKKAEDQEL). Cystine bridges form between C139–C204, C182–C232, and C192–C234. N148 carries an N-linked (GlcNAc...) asparagine glycan.

This sequence belongs to the NGF-beta family. In terms of assembly, homodimer; non-covalently linked. Expressed by the venom gland.

The protein resides in the secreted. Functionally, nerve growth factor is important for the development and maintenance of the sympathetic and sensory nervous systems. It stimulates division and differentiation of sympathetic and embryonic sensory neurons as well as basal forebrain cholinergic neurons in the brain. Its relevance in the snake venom is not clear. However, it has been shown to inhibit metalloproteinase-dependent proteolysis of platelet glycoprotein Ib alpha, suggesting a metalloproteinase inhibition to prevent metalloprotease autodigestion and/or protection against prey proteases. Binds a lipid between the two protein chains in the homodimer. The lipid-bound form promotes histamine relase from mouse mast cells, contrary to the lipid-free form. The sequence is that of Venom nerve growth factor from Oxyuranus scutellatus scutellatus (Australian taipan).